The primary structure comprises 714 residues: Neutral ceramidase A (714 aa).

The signal sequence occupies residues 1–23 (MKRSIVFIYSLVILLLSVGFIDA). 2 N-linked (GlcNAc...) asparagine glycosylation sites follow: Asn218 and Asn246. The active-site Nucleophile is Ser293. Residues Asn353, Asn373, Asn416, Asn571, Asn610, and Asn700 are each glycosylated (N-linked (GlcNAc...) asparagine).

Belongs to the neutral ceramidase family.

The protein localises to the secreted. The catalysed reaction is an N-acylsphing-4-enine + H2O = sphing-4-enine + a fatty acid. Its function is as follows. Hydrolyzes the sphingolipid ceramide into sphingosine and free fatty acid at an optimal pH of 3.0. Has no activity toward glycosphingolipids, such as GalCer and Galbeta1-3GalNAcbeta1-4(NeuAcalpha2-3)Galbeta1-4Glcbeta1-1'Cer or sphingomyelin. The protein is Neutral ceramidase A (dcd2A) of Dictyostelium discoideum (Social amoeba).